A 295-amino-acid polypeptide reads, in one-letter code: Homeobox protein XHOX-7.1 (295 aa).

Disordered stretches follow at residues 75–115 (RKPG…PISL) and 134–175 (KPES…KPRT). The segment covering 84-97 (SSPTGSPLAGTSHS) has biased composition (polar residues). Over residues 141-153 (SSWIQSPSFSPSP) the composition is skewed to low complexity. Residues 164–174 (LRKHKTNRKPR) are compositionally biased toward basic residues. A DNA-binding region (homeobox) is located at residues 170-229 (NRKPRTPFTTSQLLALERKFRQKQYLSIAERAEFSSSLNLTETQVKIWFQNRRAKAKRLQ).

It belongs to the Msh homeobox family.

It is found in the nucleus. The sequence is that of Homeobox protein XHOX-7.1 from Xenopus laevis (African clawed frog).